The primary structure comprises 249 residues: Chitooligosaccharide deacetylase (249 aa).

2 residues coordinate Mg(2+): H61 and H125.

The protein belongs to the YdjC deacetylase family. ChbG subfamily. Homodimer. The cofactor is Mg(2+).

It localises to the cytoplasm. The enzyme catalyses N,N'-diacetylchitobiose + H2O = N-acetyl-beta-D-glucosaminyl-(1-&gt;4)-D-glucosamine + acetate. It carries out the reaction diacetylchitobiose-6'-phosphate + H2O = N'-monoacetylchitobiose-6'-phosphate + acetate. It functions in the pathway glycan degradation; chitin degradation. Involved in the degradation of chitin. ChbG is essential for growth on the acetylated chitooligosaccharides chitobiose and chitotriose but is dispensable for growth on cellobiose and chitosan dimer, the deacetylated form of chitobiose. Deacetylation of chitobiose-6-P and chitotriose-6-P is necessary for both the activation of the chb promoter by the regulatory protein ChbR and the hydrolysis of phosphorylated beta-glucosides by the phospho-beta-glucosidase ChbF. Catalyzes the removal of only one acetyl group from chitobiose-6-P to yield monoacetylchitobiose-6-P, the inducer of ChbR and the substrate of ChbF. The chain is Chitooligosaccharide deacetylase from Escherichia coli O7:K1 (strain IAI39 / ExPEC).